The following is a 545-amino-acid chain: CTP synthase (545 aa).

An amidoligase domain region spans residues 1–267 (MTKFIFVTGG…AEQTLKLLQM (267 aa)). Ser-13 provides a ligand contact to CTP. UTP is bound at residue Ser-13. Residues 14-19 (SIGKGI) and Asp-71 contribute to the ATP site. Residues Asp-71 and Glu-141 each coordinate Mg(2+). CTP is bound by residues 148 to 150 (DIE), 188 to 193 (KTKPTQ), and Lys-224. UTP contacts are provided by residues 188-193 (KTKPTQ) and Lys-224. Residues 292–534 (EIAIVGKYVS…VQAAIAQSHP (243 aa)) form the Glutamine amidotransferase type-1 domain. L-glutamine is bound at residue Gly-354. The active-site Nucleophile; for glutamine hydrolysis is the Cys-381. L-glutamine contacts are provided by residues 382-385 (LGMQ), Glu-405, and Arg-462. Active-site residues include His-507 and Glu-509.

This sequence belongs to the CTP synthase family. As to quaternary structure, homotetramer.

It catalyses the reaction UTP + L-glutamine + ATP + H2O = CTP + L-glutamate + ADP + phosphate + 2 H(+). The enzyme catalyses L-glutamine + H2O = L-glutamate + NH4(+). The catalysed reaction is UTP + NH4(+) + ATP = CTP + ADP + phosphate + 2 H(+). It functions in the pathway pyrimidine metabolism; CTP biosynthesis via de novo pathway; CTP from UDP: step 2/2. Allosterically activated by GTP, when glutamine is the substrate; GTP has no effect on the reaction when ammonia is the substrate. The allosteric effector GTP functions by stabilizing the protein conformation that binds the tetrahedral intermediate(s) formed during glutamine hydrolysis. Inhibited by the product CTP, via allosteric rather than competitive inhibition. Catalyzes the ATP-dependent amination of UTP to CTP with either L-glutamine or ammonia as the source of nitrogen. Regulates intracellular CTP levels through interactions with the four ribonucleotide triphosphates. This is CTP synthase from Trichormus variabilis (strain ATCC 29413 / PCC 7937) (Anabaena variabilis).